Here is an 867-residue protein sequence, read N- to C-terminus: Protein translocase subunit SecA (867 aa).

ATP contacts are provided by residues Q85, 103–107, and D491; that span reads GEGKT.

It belongs to the SecA family. Monomer and homodimer. Part of the essential Sec protein translocation apparatus which comprises SecA, SecYEG and auxiliary proteins SecDF. Other proteins may also be involved.

Its subcellular location is the cell membrane. The protein localises to the cytoplasm. It carries out the reaction ATP + H2O + cellular proteinSide 1 = ADP + phosphate + cellular proteinSide 2.. Part of the Sec protein translocase complex. Interacts with the SecYEG preprotein conducting channel. Has a central role in coupling the hydrolysis of ATP to the transfer of proteins into and across the cell membrane, serving as an ATP-driven molecular motor driving the stepwise translocation of polypeptide chains across the membrane. In Mycoplasmopsis pulmonis (strain UAB CTIP) (Mycoplasma pulmonis), this protein is Protein translocase subunit SecA.